The primary structure comprises 113 residues: Hydrogenase maturation factor HypA (113 aa).

H2 lines the Ni(2+) pocket. Zn(2+)-binding residues include C73, C76, C89, and C92.

This sequence belongs to the HypA/HybF family.

Functionally, involved in the maturation of [NiFe] hydrogenases. Required for nickel insertion into the metal center of the hydrogenase. The chain is Hydrogenase maturation factor HypA from Dechloromonas aromatica (strain RCB).